The primary structure comprises 277 residues: Large ribosomal subunit protein uL2 (277 aa).

2 disordered regions span residues 37 to 60 and 223 to 264; these read KNST…GHKH and VVMN…NKRT. The span at 39–49 shows a compositional bias: polar residues; that stretch reads STAGRNNNGHI. A compositionally biased stretch (basic residues) spans 50–60; sequence TTRHKGGGHKH. Positions 229–244 are enriched in basic and acidic residues; sequence DHPHGGGEGRTGEARE.

The protein belongs to the universal ribosomal protein uL2 family. As to quaternary structure, part of the 50S ribosomal subunit. Forms a bridge to the 30S subunit in the 70S ribosome.

Its function is as follows. One of the primary rRNA binding proteins. Required for association of the 30S and 50S subunits to form the 70S ribosome, for tRNA binding and peptide bond formation. It has been suggested to have peptidyltransferase activity; this is somewhat controversial. Makes several contacts with the 16S rRNA in the 70S ribosome. This Neisseria meningitidis serogroup B (strain ATCC BAA-335 / MC58) protein is Large ribosomal subunit protein uL2.